A 210-amino-acid chain; its full sequence is uncharacterized protein (210 aa).

Positions 101 to 114 (QELPEPSSPQSQSS) are enriched in low complexity. The interval 101–166 (QELPEPSSPQ…SSGVSSDLQK (66 aa)) is disordered. The span at 147-164 (RSTSPVTASTSSGVSSDL) shows a compositional bias: polar residues.

This is an uncharacterized protein from Alcelaphine herpesvirus 1 (strain C500) (AlHV-1).